Here is a 458-residue protein sequence, read N- to C-terminus: Elongation factor 1-alpha (458 aa).

At glycine 2 the chain carries N,N,N-trimethylglycine. An N6,N6-dimethyllysine; alternate modification is found at lysine 3. Lysine 3 is subject to N6-methyllysine; alternate. The region spanning 5–240 is the tr-type G domain; the sequence is KTHVNVVVIG…DAIEPPQRPT (236 aa). Residues 14 to 21 form a G1 region; that stretch reads GHVDSGKS. Position 14 to 21 (14 to 21) interacts with GTP; sequence GHVDSGKS. Lysine 30 carries the post-translational modification N6-methyllysine. Residues 70-74 form a G2 region; sequence GITID. Lysine 79 is modified (N6,N6,N6-trimethyllysine). Residues 91–94 form a G3 region; sequence DAPG. GTP is bound by residues 91-95 and 153-156; these read DAPGH and NKMD. The tract at residues 153–156 is G4; that stretch reads NKMD. The interval 192 to 194 is G5; sequence SGW. An N6,N6-dimethyllysine; alternate modification is found at lysine 316. The residue at position 316 (lysine 316) is an N6-methyllysine; alternate. An N6-methyllysine modification is found at lysine 390.

The protein belongs to the TRAFAC class translation factor GTPase superfamily. Classic translation factor GTPase family. EF-Tu/EF-1A subfamily.

The protein localises to the cytoplasm. It functions in the pathway protein biosynthesis; polypeptide chain elongation. This protein promotes the GTP-dependent binding of aminoacyl-tRNA to the A-site of ribosomes during protein biosynthesis. The polypeptide is Elongation factor 1-alpha (TEF1) (Meyerozyma guilliermondii (strain ATCC 6260 / CBS 566 / DSM 6381 / JCM 1539 / NBRC 10279 / NRRL Y-324) (Yeast)).